Here is a 368-residue protein sequence, read N- to C-terminus: Transcription factor TGA7 (368 aa).

The span at 70-82 shows a compositional bias: polar residues; that stretch reads HNQIEAEQPSSND. Positions 70–89 are disordered; the sequence is HNQIEAEQPSSNDNQDDDGR. A bZIP domain is found at 91–151; the sequence is HDKMKRRLAQ…LGPSGSINTG (61 aa). Coiled-coil stretches lie at residues 92–142 and 252–285; these read DKMK…QGHL and DQQI…SLAE. The interval 93–113 is basic motif; sequence KMKRRLAQNREAARKSRLRKK. The interval 119-133 is leucine-zipper; it reads LEESRLKLSQLEQEL. One can recognise a DOG1 domain in the interval 152–363; the sequence is IASFEMEYSH…RALSSLWAAR (212 aa).

It belongs to the bZIP family. As to quaternary structure, binds DNA as a dimer. Interacts with NPR1 and NPR4. Interacts with GRXC7/ROXY1.

It localises to the nucleus. Transcriptional activator that binds specifically to the DNA sequence 5'-TGACG-3'. Recognizes ocs elements like the as-1 motif of the cauliflower mosaic virus 35S promoter. Binding to the as-1-like cis elements mediate auxin- and salicylic acid-inducible transcription. May be involved in the induction of the systemic acquired resistance (SAR) via its interaction with NPR1. The polypeptide is Transcription factor TGA7 (TGA7) (Arabidopsis thaliana (Mouse-ear cress)).